We begin with the raw amino-acid sequence, 705 residues long: UvrABC system protein C (705 aa).

The GIY-YIG domain maps to 16–95; that stretch reads ETPGVYRFRD…IKQFDPRFNV (80 aa). A UVR domain is found at 208 to 243; it reads GRYLRRLEREMQQAAQAQEYERAARLRDDIGALRRA. Positions 315 to 332 are enriched in low complexity; it reads AASTGTAGSTVPTTTAGS. 2 disordered regions span residues 315–335 and 683–705; these read AAST…SQGE and RADA…ETVS.

The protein belongs to the UvrC family. Interacts with UvrB in an incision complex.

Its subcellular location is the cytoplasm. In terms of biological role, the UvrABC repair system catalyzes the recognition and processing of DNA lesions. UvrC both incises the 5' and 3' sides of the lesion. The N-terminal half is responsible for the 3' incision and the C-terminal half is responsible for the 5' incision. This chain is UvrABC system protein C, found in Frankia casuarinae (strain DSM 45818 / CECT 9043 / HFP020203 / CcI3).